The following is a 434-amino-acid chain: Arginine/serine-rich coiled-coil protein 2 (434 aa).

The span at 1–27 shows a compositional bias: basic and acidic residues; the sequence is MAASDTERDGLAPEKTSPDRDKKKEQS. Residues 1–230 form a disordered region; the sequence is MAASDTERDG…PSPPPFRGRN (230 aa). The residue at position 2 (Ala2) is an N-acetylalanine. At Ser4 the chain carries Phosphoserine. Phosphothreonine occurs at positions 6 and 16. Residues Ser17, Ser30, and Ser32 each carry the phosphoserine modification. Residues 35 to 51 are compositionally biased toward basic residues; the sequence is ASKHHYSRSRSRSRERK. Residues 66 to 111 show a composition bias toward basic and acidic residues; the sequence is RSKEGRRHESKDKSSKKHKSEEHNDKEHSSDKGRERLNSSENGEDR. Ser104 is modified (phosphoserine). Basic residues predominate over residues 112-214; the sequence is HKRKERKSSR…KRIEKPRRFS (103 aa). A coiled-coil region spans residues 230–270; the sequence is NTAMDAQEALARRLERAKKLQEQREKEMVEKQKQQEIAAAA. Residue Lys375 forms a Glycyl lysine isopeptide (Lys-Gly) (interchain with G-Cter in SUMO1); alternate linkage. Residue Lys375 forms a Glycyl lysine isopeptide (Lys-Gly) (interchain with G-Cter in SUMO2); alternate linkage. At Ser376 the chain carries Phosphoserine.

The protein belongs to the RSRC2 family.

The sequence is that of Arginine/serine-rich coiled-coil protein 2 (RSRC2) from Homo sapiens (Human).